A 247-amino-acid polypeptide reads, in one-letter code: MPHPPSAALSLPRNGFTLKRFFVAHDRCEMKVGTDSIMLGAWLPLRGDERHILDIGSGSGVLALMMAQRSTAQVDGVEIEPGAATQGQENFLASPWPTRLTMHTLSLQAFSAGCGRRYDLIVSNPPYFAPGVACRTAARATARYTDSLDHAALLRHAAELSCEDGRLALVLPVEAAESVVSKGMTHGWHLLRRTAVRDRADKPVRRTLLLFGRIPAAVQSNTLDIRDDSSEYSCIFRNMTKDFYLFF.

This sequence belongs to the methyltransferase superfamily. tRNA (adenine-N(6)-)-methyltransferase family.

It localises to the cytoplasm. The enzyme catalyses adenosine(37) in tRNA1(Val) + S-adenosyl-L-methionine = N(6)-methyladenosine(37) in tRNA1(Val) + S-adenosyl-L-homocysteine + H(+). In terms of biological role, specifically methylates the adenine in position 37 of tRNA(1)(Val) (anticodon cmo5UAC). This chain is tRNA1(Val) (adenine(37)-N6)-methyltransferase, found in Edwardsiella ictaluri (strain 93-146).